We begin with the raw amino-acid sequence, 736 residues long: Elongation factor 2 (736 aa).

One can recognise a tr-type G domain in the interval 18-262 (TRVRNIGIIA…AVIKFVPNPV (245 aa)). Residues 27 to 34 (AHVDHGKT), 93 to 97 (DTPGH), and 147 to 150 (NKVD) contribute to the GTP site. A Diphthamide modification is found at H603.

The protein belongs to the TRAFAC class translation factor GTPase superfamily. Classic translation factor GTPase family. EF-G/EF-2 subfamily.

Its subcellular location is the cytoplasm. In terms of biological role, catalyzes the GTP-dependent ribosomal translocation step during translation elongation. During this step, the ribosome changes from the pre-translocational (PRE) to the post-translocational (POST) state as the newly formed A-site-bound peptidyl-tRNA and P-site-bound deacylated tRNA move to the P and E sites, respectively. Catalyzes the coordinated movement of the two tRNA molecules, the mRNA and conformational changes in the ribosome. The chain is Elongation factor 2 from Metallosphaera sedula (strain ATCC 51363 / DSM 5348 / JCM 9185 / NBRC 15509 / TH2).